Here is a 388-residue protein sequence, read N- to C-terminus: Probable mannan endo-1,4-beta-mannosidase A-1 (388 aa).

The first 20 residues, Met1–Ala20, serve as a signal peptide directing secretion. Residues Trp93 and Asn206 each coordinate substrate. Glu207 (proton donor) is an active-site residue. An N-linked (GlcNAc...) asparagine glycan is attached at Asn264. Tyr282 provides a ligand contact to substrate. The Nucleophile role is filled by Glu315. An N-linked (GlcNAc...) asparagine glycan is attached at Asn335. Trp345 provides a ligand contact to substrate.

It belongs to the glycosyl hydrolase 5 (cellulase A) family.

Its subcellular location is the secreted. The catalysed reaction is Random hydrolysis of (1-&gt;4)-beta-D-mannosidic linkages in mannans, galactomannans and glucomannans.. In terms of biological role, endo-1,4-mannanase, a crucial enzyme for depolymerization of seed galactomannans and wood galactoglucomannans. The protein is Probable mannan endo-1,4-beta-mannosidase A-1 (manA-1) of Aspergillus terreus (strain NIH 2624 / FGSC A1156).